Reading from the N-terminus, the 4691-residue chain is Plectin (4691 aa).

Residues 1–1478 form a globular 1 region; it reads MVAGMLMPLD…SELTTLTSQY (1478 aa). R21 carries the post-translational modification Phosphoserine. V26 carries the post-translational modification Phosphotyrosine. Disordered regions lie at residues 113–161 and 167–186; these read RSPH…TPVV and GTLA…RDRV. Residues 137 to 154 show a composition bias toward basic and acidic residues; the sequence is DPAREERQVYRRKEREEG. The interval 181-411 is actin-binding; sequence DERDRVQKKT…YVSSLYDAMP (231 aa). 2 Calponin-homology (CH) domains span residues 185–293 and 306–411; these read RVQK…LHFQ and MTAK…DAMP. The Spectrin 1 repeat unit spans residues 653 to 727; it reads LQSTQRRPEL…ERARNDESQL (75 aa). A Phosphoserine modification is found at S728. 2 Spectrin repeats span residues 748–832 and 845–938; these read KLLN…REDH and LQTQ…AIVQ. T823 is modified (phosphothreonine). One can recognise an SH3 domain in the interval 949–1006; sequence RGHVPLIAVCDYKQVEVTVHKGDQCQLVGPAQPSHWKVLSGSSSEAAVPSVCFLVPPP. Positions 963-4572 are required for interaction with intermediate filament proteins; the sequence is VEVTVHKGDQ…ARTAQKLRDV (3610 aa). S1055 carries the phosphoserine modification. Residues 1323-1423 form a Spectrin 4 repeat; it reads RERVTQLLER…QKFAKQYINA (101 aa). S1443 is modified (phosphoserine). 2 coiled-coil regions span residues 1477 to 1697 and 1729 to 2764; these read QYIK…ERRL and SFAE…TTQA. The interval 1479-2762 is central fibrous rod domain; sequence IKFISETLRR…ALAHSEIATT (1284 aa). The segment at 1626 to 1653 is disordered; that stretch reads RAEEAEAQKRQAQEEAERLRRQVQDESQ. S1729 is modified (phosphoserine). K1733 carries the post-translational modification N6-acetyllysine. Disordered regions lie at residues 1801–1835, 2100–2141, and 2223–2317; these read SLAQ…RELA, AEDT…SLAA, and RLRS…KHKK. Basic and acidic residues-rich tracts occupy residues 1806-1835, 2100-2116, 2124-2136, and 2223-2266; these read DAEK…RELA, AEDT…EAAR, EEQR…ERVQ, and RLRS…KQSA. The span at 2267–2280 shows a compositional bias: low complexity; the sequence is EEQAQAQAQAQAAA. The span at 2281-2296 shows a compositional bias: basic and acidic residues; the sequence is EKLRKEAEQEAARRAQ. S2639 is subject to Phosphoserine. K2644 carries the N6-acetyllysine modification. The tract at residues 2675–2728 is disordered; it reads LREEQQRQQQQMEQEKQELMASMEEARRRQREAEEGVRRKQEELQHLEQQRQQQ. Basic and acidic residues predominate over residues 2687 to 2728; the sequence is EQEKQELMASMEEARRRQREAEEGVRRKQEELQHLEQQRQQQ. Residues 2763 to 4691 form a globular 2 region; that stretch reads QAASTKALPN…SLGGPESAVA (1929 aa). S2781 carries the post-translational modification Phosphoserine. Y2788 carries the phosphotyrosine modification. Plectin repeat units follow at residues 2795-2832, 2833-2870, 2871-2908, 2909-2946, 2947-2984, and 2988-3022; these read QKVP…REDV, YRYL…PGTA, LILL…PELH, HKLL…RDHG, VRLL…EEMN, and SDPS…PETG. S2809 carries the phosphoserine modification. Position 2893 is a phosphothreonine (T2893). At Y3040 the chain carries Phosphotyrosine. N6-acetyllysine is present on residues K3060 and K3098. Plectin repeat units follow at residues 3123-3160, 3161-3198, 3199-3236, 3237-3274, 3275-3312, and 3315-3350; these read ALVP…ADSV, RQAL…PEVA, VALL…PELH, EKLL…REQG, LRLL…KETN, and LTSP…QLTG. Over residues 3312–3326 the composition is skewed to basic and acidic residues; that stretch reads NRALTSPRDDARVYH. Positions 3312–3338 are disordered; it reads NRALTSPRDDARVYHDPSTQEPVTYSQ. The segment covering 3328–3338 has biased composition (polar residues); that stretch reads PSTQEPVTYSQ. Position 3369 is a phosphotyrosine (Y3369). K3427 carries the post-translational modification N6-acetyllysine. Plectin repeat units lie at residues 3492–3529, 3530–3567, 3568–3605, 3606–3643, and 3647–3681; these read RTLL…PSTA, TLLL…PELH, EKLL…RDHA, IRLL…EEMN, and ADPS…PETG. T3792 is modified (phosphothreonine). Y3797 carries the phosphotyrosine modification. Plectin repeat units lie at residues 3827-3864, 3865-3902, 3903-3940, 3941-3978, and 3982-4015; these read WRYL…AEVA, RLLL…PELH, DRLL…AEEA, LRLL…KDTH, and SEPS…DPSG. The required for interaction with type2 keratins, DES and VIM stretch occupies residues 3954–4291; that stretch reads VDPRLGFHLP…KRRVVIVDPE (338 aa). A Phosphothreonine modification is found at T4037. Residue S4061 is modified to Phosphoserine. Plectin repeat units follow at residues 4070-4107, 4108-4145, 4146-4183, 4184-4221, 4225-4259, and 4272-4312; these read QKFL…PGTA, FELL…PEFK, DKLL…KDHG, IRLL…EEMN, TDPS…PQTG, and RKTS…HQTY. A binding to intermediate filaments region spans residues 4257–4307; that stretch reads QTGLCLLPLKEKKRERKTSSKSSVRKRRVVIVDPETGKEMSVYEAYRKGLI. A disordered region spans residues 4387-4420; it reads FRSRSSSVGSSSSYPISSAGPRTQLASWSDPTEE. A phosphoserine mark is found at S4389, S4391, S4392, S4393, S4396, S4397, S4398, and S4399. Low complexity predominate over residues 4389–4404; the sequence is SRSSSVGSSSSYPISS. Y4400 is modified (phosphotyrosine). Residues S4403 and S4413 each carry the phosphoserine modification. The segment covering 4406 to 4416 has biased composition (polar residues); it reads GPRTQLASWSD. Plectin repeat units follow at residues 4415-4452, 4453-4490, 4491-4528, 4529-4566, and 4567-4604; these read SDPT…NITG, QRLL…KIMV, DRIN…YEAG, QRFL…ARTA, and QKLR…EGTG. T4418 is modified (phosphothreonine). Positions 4503–4572 are required for efficient interaction with KRT5 and KRT14 heterodimers; that stretch reads FEDPRTKTKM…ARTAQKLRDV (70 aa). T4546 is modified (phosphothreonine; by CDK1). A phosphoserine mark is found at S4614 and S4620. The segment covering 4618-4678 has biased composition (low complexity); it reads YYSPYSVSGS…SGYGRRYASG (61 aa). Residues 4618-4691 are disordered; sequence YYSPYSVSGS…SLGGPESAVA (74 aa). At Y4622 the chain carries Phosphotyrosine. Residues S4623, S4625, and S4629 each carry the phosphoserine modification. A Phosphothreonine modification is found at T4630. The 4 X 4 AA tandem repeats of G-S-R-X stretch occupies residues 4632 to 4647; sequence GSRTGSRTGSRAGSRR. S4633 bears the Phosphoserine mark. An omega-N-methylarginine mark is found at R4634 and R4647. S4649 and S4682 each carry phosphoserine.

It belongs to the plakin or cytolinker family. Homodimer or homotetramer. Interacts (via actin-binding domain) with SYNE3. Interacts (via calponin-homology (CH) 1 domain) with VIM (via rod region). Interacts (via N-terminus) with DST isoform 2 (via N-terminus). Interacts with FER. Interacts with TOR1A. Interacts with ANK3. Identified in complexes that contain VIM, EZR, AHNAK, BFSP1, BFSP2, ANK2, PLEC, PRX and spectrin. As to quaternary structure, interacts with KRT14, heterodimers consisting of KRT8 and KRT18, heterodimers consisting of KRT5 and KRT14, heterodimers consisting of KRT14 and KRT15, and heterodimers consisting of KRT1 and KRT10. Interacts with DES and VIM. In terms of processing, phosphorylated by CDK1; regulates dissociation from intermediate filaments during mitosis. Isoform PLEC-1A is phosphorylated on Ser-21. Isoform PLEC-1A is phosphorylated on Tyr-26. As to expression, detected in eye lens fiber cells (at protein level). Expressed at high levels in lung, brain, small intestine, muscle, heart and skin with lower levels found in kidney, liver, uterus, spleen and salivary gland.

The protein resides in the cytoplasm. It localises to the cytoskeleton. The protein localises to the cell junction. Its subcellular location is the hemidesmosome. It is found in the cell projection. The protein resides in the podosome. In terms of biological role, interlinks intermediate filaments with microtubules and microfilaments and anchors intermediate filaments to desmosomes or hemidesmosomes. May be involved not only in the cross-linking and stabilization of cytoskeletal intermediate filaments network, but also in the regulation of their dynamics. This chain is Plectin (Plec), found in Mus musculus (Mouse).